The chain runs to 272 residues: HMP-PP phosphatase (272 aa).

Aspartate 8 acts as the Nucleophile in catalysis. Mg(2+) is bound by residues aspartate 8, aspartate 10, and aspartate 212.

This sequence belongs to the HAD-like hydrolase superfamily. Cof family. Mg(2+) serves as cofactor.

It carries out the reaction 4-amino-2-methyl-5-(diphosphooxymethyl)pyrimidine + H2O = 4-amino-2-methyl-5-(phosphooxymethyl)pyrimidine + phosphate + H(+). Catalyzes the hydrolysis of 4-amino-2-methyl-5-hydroxymethylpyrimidine pyrophosphate (HMP-PP) to 4-amino-2-methyl-5-hydroxymethylpyrimidine phosphate (HMP-P). The sequence is that of HMP-PP phosphatase from Escherichia coli (strain 55989 / EAEC).